The primary structure comprises 612 residues: Cytoplasmic dynein 1 intermediate chain 2 (612 aa).

Basic and acidic residues-rich tracts occupy residues 1–13 (MSDK…ELER) and 20–43 (QIRE…KKEA). A disordered region spans residues 1–188 (MSDKSDLKAE…PHELTEEEKQ (188 aa)). Ser-2 carries the post-translational modification N-acetylserine. Ser-51 is subject to Diphosphoserine. Ser-51 and Ser-84 each carry phosphoserine. Residues 82 to 91 (PSSKSVSTPS) are compositionally biased toward low complexity. Thr-89 is subject to Phosphothreonine. Phosphoserine is present on residues Ser-91, Ser-95, and Ser-98. Over residues 164–188 (EKTLKKDEENDSKAPPHELTEEEKQ) the composition is skewed to basic and acidic residues. WD repeat units lie at residues 251–300 (SKHR…TTPE), 304–344 (HCQS…RTPV), 353–394 (AHTH…HPQD), 403–443 (SKAV…AGIS), 448–493 (GHQG…PLYS), 496–536 (DNSD…EVPT), and 542–581 (EGNP…AVPR).

Belongs to the dynein intermediate chain family. In terms of assembly, homodimer. The cytoplasmic dynein 1 complex consists of two catalytic heavy chains (HCs) and a number of non-catalytic subunits presented by intermediate chains (ICs), light intermediate chains (LICs) and light chains (LCs); the composition seems to vary in respect to the IC, LIC and LC composition. The heavy chain homodimer serves as a scaffold for the probable homodimeric assembly of the respective non-catalytic subunits. The ICs and LICs bind directly to the HC dimer and the LCs assemble on the IC dimer. Interacts with DYNLT3. Interacts with DYNLT1. Interacts (dephosphorylated at Ser-84) with DCTN1. Interacts with BICD2. Interacts with SPEF2. Interacts with CFAP61. In terms of processing, the phosphorylation status of Ser-84 appears to be involved in dynactin-dependent target binding. Post-translationally, pyrophosphorylation by 5-diphosphoinositol pentakisphosphate (5-IP7) promotes interaction with DCTN1. Serine pyrophosphorylation is achieved by Mg(2+)-dependent, but enzyme independent transfer of a beta-phosphate from a inositol pyrophosphate to a pre-phosphorylated serine residue.

It is found in the cytoplasm. Its subcellular location is the cytoskeleton. In terms of biological role, acts as one of several non-catalytic accessory components of the cytoplasmic dynein 1 complex that are thought to be involved in linking dynein to cargos and to adapter proteins that regulate dynein function. Cytoplasmic dynein 1 acts as a motor for the intracellular retrograde motility of vesicles and organelles along microtubules. The intermediate chains mediate the binding of dynein to dynactin via its 150 kDa component (p150-glued) DCTN1. Involved in membrane-transport, such as Golgi apparatus, late endosomes and lysosomes. The protein is Cytoplasmic dynein 1 intermediate chain 2 (Dync1i2) of Mus musculus (Mouse).